Consider the following 627-residue polypeptide: MAWQGKLTDRTASIFQGKQMSLKLINIPRVKLSAAAFTKAFCHHKLIEVNATSVDSELLAPDIIHALQSSAWIQKNLQCLVLDSVSIPPNSGLVALSHFTGLHTLSVANVSFCNEDLVSVSQLPNLGSLDISNTLVTNISALLSCKNRLRSLTMHYLKCLAMNSPQVLAVIRQLKCLLHLDISDHQQLRSDLAFYLLQQKDILPNLTSLDISGGTDVTDQAVESFLQHRPAMRFVGLLYTDAGYSDFFTAKQGLKVAGGANMSQISEALSRYRNRSCFVKEALFRLFTETLSLRAVLPVMLKLVAIGMRNHPLDLPVQFTASACALNLTRQELARGMPVRLLAEITDLLFKATKNFPYYQQLQKNCLLSLTSSRILMDVPFDRFDAAKLALRWVCRRESPKLRTMAVSITSILALKLSPEEMGQLQEELIMAIKELLTIIRQKLAENLDDVTFLFTLKALWNLTDECPLACKYFMENEGLATVIRVLETFSISVIQSKVLGLLNNVAEVRELSSKLVTEDVIERIISLLHSSNLEVSFLAAGVLAHLTCDRQHWLSRDLQRTDLLRYLHLAIQNWPSSRCDMSVLVTYRSFKAFSPLLVNFSQPEVQRWALWAIHHVCSKNPRPKDV.

LRR repeat units lie at residues 123 to 146 (LPNLGSLDISNTLVTNISALLSCK), 203 to 227 (LPNLTSLDISGGTDVTDQAVESFLQ), and 409 to 432 (ITSILALKLSPEEMGQLQEELIMA).

It belongs to the zyg-11 family.

In terms of biological role, probably acts as a target recruitment subunit in an E3 ubiquitin ligase complex ZYGA-CUL2-elongin BC. The sequence is that of Protein zyg-11 homolog A (Zyg11a) from Mus musculus (Mouse).